A 281-amino-acid polypeptide reads, in one-letter code: Fructose-bisphosphate aldolase class 1 (281 aa).

The active-site Schiff-base intermediate with dihydroxyacetone-P is the Lys191.

This sequence belongs to the DeoC/FbaB aldolase family. In terms of assembly, homooctamer.

Its subcellular location is the cytoplasm. The protein localises to the chromosome. The catalysed reaction is beta-D-fructose 1,6-bisphosphate = D-glyceraldehyde 3-phosphate + dihydroxyacetone phosphate. With respect to regulation, activated by citrate. This Thermococcus kodakarensis (strain ATCC BAA-918 / JCM 12380 / KOD1) (Pyrococcus kodakaraensis (strain KOD1)) protein is Fructose-bisphosphate aldolase class 1 (fba).